The following is a 413-amino-acid chain: Gamma-glutamyl phosphate reductase (413 aa).

Belongs to the gamma-glutamyl phosphate reductase family.

It localises to the cytoplasm. The catalysed reaction is L-glutamate 5-semialdehyde + phosphate + NADP(+) = L-glutamyl 5-phosphate + NADPH + H(+). It functions in the pathway amino-acid biosynthesis; L-proline biosynthesis; L-glutamate 5-semialdehyde from L-glutamate: step 2/2. Functionally, catalyzes the NADPH-dependent reduction of L-glutamate 5-phosphate into L-glutamate 5-semialdehyde and phosphate. The product spontaneously undergoes cyclization to form 1-pyrroline-5-carboxylate. This is Gamma-glutamyl phosphate reductase from Thermus thermophilus (strain ATCC 27634 / DSM 579 / HB8).